The sequence spans 157 residues: Ribosome maturation factor RimP (157 aa).

The protein belongs to the RimP family.

The protein resides in the cytoplasm. Functionally, required for maturation of 30S ribosomal subunits. The protein is Ribosome maturation factor RimP of Lactococcus lactis subsp. cremoris (strain MG1363).